We begin with the raw amino-acid sequence, 225 residues long: MAEKRAEKRKFNTEAWEPKTQIGRMVKEGTISDISYIMDKGLPLLEPEIVDALLPDLEEQVLDVKLVQRMHKSGRRARYRATVVVGNKNGYVGVGMGKSKEVGPAIRKAIAHAKLSLIKVRVGCGSWECGCGSPHSIPFTAKGACGSVKVELLPAPRGVGLVAGNVAKAVLGLAGVKDAWTKTFGDTRTTYNFAEATFDALNNLNFVRCLPNQKEKLGLTEGRVL.

Residues 57–120 (LEEQVLDVKL…AHAKLSLIKV (64 aa)) form the S5 DRBM domain.

The protein belongs to the universal ribosomal protein uS5 family. In terms of assembly, part of the 30S ribosomal subunit. Contacts protein S4.

Its function is as follows. With S4 and S12 plays an important role in translational accuracy. The chain is Small ribosomal subunit protein uS5 from Methanococcus maripaludis (strain DSM 14266 / JCM 13030 / NBRC 101832 / S2 / LL).